The sequence spans 299 residues: tRNA dimethylallyltransferase (299 aa).

ATP is bound at residue 10 to 17 (GPTAVGKT). Residue 12–17 (TAVGKT) coordinates substrate. Positions 35–38 (DSQQ) are interaction with substrate tRNA.

Belongs to the IPP transferase family. In terms of assembly, monomer. Mg(2+) serves as cofactor.

It catalyses the reaction adenosine(37) in tRNA + dimethylallyl diphosphate = N(6)-dimethylallyladenosine(37) in tRNA + diphosphate. In terms of biological role, catalyzes the transfer of a dimethylallyl group onto the adenine at position 37 in tRNAs that read codons beginning with uridine, leading to the formation of N6-(dimethylallyl)adenosine (i(6)A). This Streptococcus thermophilus (strain ATCC BAA-250 / LMG 18311) protein is tRNA dimethylallyltransferase.